Reading from the N-terminus, the 23-residue chain is Putative gene 50 protein (23 aa).

This is Putative gene 50 protein (50) from Bacillus subtilis (Bacteriophage SP01).